We begin with the raw amino-acid sequence, 615 residues long: Delta-like protein B (615 aa).

The N-terminal stretch at 1–20 (MAHLSLYCLLSVSLLQLVAS) is a signal peptide. At 21 to 522 (SGVFELKVHS…VGQTSPSAVA (502 aa)) the chain is on the extracellular side. The 45-residue stretch at 159 to 203 (VFCDEFYFGEACSDYCRPRDDTLGHYTCDENGNKECLVGWQGDYC) folds into the DSL domain. 26 disulfides stabilise this stretch: C161/C170, C174/C186, C194/C203, C208/C219, C212/C225, C227/C236, C245/C250, C258/C267, C274/C286, C280/C296, C298/C307, C314/C325, C319/C334, C336/C345, C352/C363, C357/C373, C375/C384, C391/C402, C396/C411, C413/C422, C429/C440, C434/C449, C451/C460, C467/C478, C472/C487, and C489/C498. 3 EGF-like domains span residues 204 to 237 (SDPI…PSCS), 241 to 268 (HYPG…LFCN), and 270 to 308 (DLNY…TNCE). In terms of domain architecture, EGF-like 4; calcium-binding spans 310–346 (EINECDCNPCKNGGSCNDLENDYSCTCPQGFYGKNCE). EGF-like domains lie at 348 to 385 (IAMT…SNCE) and 387 to 423 (RLDR…SRCE). In terms of domain architecture, EGF-like 7; calcium-binding spans 425–461 (NIDDCARYPCQNAGTCQDGINDYTCTCTLGFTGKNCS). An N-linked (GlcNAc...) asparagine glycan is attached at N459. In terms of domain architecture, EGF-like 8 spans 463-499 (RADACLTNPCLHGGTCFTHFSGPVCQCVPGFMGSTCE). The chain crosses the membrane as a helical span at residues 523-543 (VSCVLGVLAVFLGVCVGLVVL). Residues 544 to 615 (RRRRHRLRRQ…FLWSAGGGLR (72 aa)) are Cytoplasmic-facing.

Post-translationally, ubiquitinated by mib, leading to its endocytosis and subsequent degradation.

The protein resides in the membrane. In terms of biological role, acts as a ligand for Notch receptors and is involved in primary neurogenesis. Can activate Notch receptors, thereby playing a key role in lateral inhibition, a process that prevents the immediate neighbors of each nascent neural cell from simultaneously embarking on neural differentiation. The sequence is that of Delta-like protein B (dlb) from Danio rerio (Zebrafish).